The sequence spans 235 residues: Vacuolar protein sorting-associated protein 60.2 (235 aa).

The interval M1–S30 is disordered. The segment covering A20 to S30 has biased composition (basic and acidic residues). Positions L99–T148 form a coiled coil. Residues D174 to G235 form a disordered region.

It belongs to the SNF7 family.

It localises to the endosome. Its subcellular location is the multivesicular body membrane. Functionally, probable peripherally associated component of the endosomal sorting required for transport complex III (ESCRT-III) which is involved in multivesicular bodies (MVBs) formation and sorting of endosomal cargo proteins into MVBs. The sequence is that of Vacuolar protein sorting-associated protein 60.2 from Arabidopsis thaliana (Mouse-ear cress).